The primary structure comprises 257 residues: Diphthine synthase (257 aa).

S-adenosyl-L-methionine contacts are provided by residues L9, D83, M86, 111 to 112 (SI), and I163.

This sequence belongs to the diphthine synthase family. In terms of assembly, homodimer.

It carries out the reaction 2-[(3S)-amino-3-carboxypropyl]-L-histidyl-[translation elongation factor 2] + 3 S-adenosyl-L-methionine = diphthine-[translation elongation factor 2] + 3 S-adenosyl-L-homocysteine + 3 H(+). It participates in protein modification; peptidyl-diphthamide biosynthesis. Its function is as follows. S-adenosyl-L-methionine-dependent methyltransferase that catalyzes the trimethylation of the amino group of the modified target histidine residue in translation elongation factor 2 (EF-2), to form an intermediate called diphthine. The three successive methylation reactions represent the second step of diphthamide biosynthesis. The sequence is that of Diphthine synthase from Thermoplasma acidophilum (strain ATCC 25905 / DSM 1728 / JCM 9062 / NBRC 15155 / AMRC-C165).